A 557-amino-acid chain; its full sequence is Protein PNS1 (557 aa).

The disordered stretch occupies residues 1–58 (MSTEKQYQPQQPPPAYTGQGPDNGNAYGYPESYGKTETHSGDSCSGDTSMNPQQQGQQ). The Cytoplasmic segment spans residues 1–99 (MSTEKQYQPQ…DNNKPKFNDW (99 aa)). Residues 41–58 (GDSCSGDTSMNPQQQGQQ) are compositionally biased toward polar residues. A helical transmembrane segment spans residues 100 to 120 (PFIIVFLLTLCGFIVVASLTL). Residues 121–147 (RAWSQTYSSTGSGIYHDFDTGTLNTNS) lie on the Extracellular side of the membrane. The helical transmembrane segment at 148 to 168 (VILLVFSVVIAIFFAFIGIVL) threads the bilayer. Over 169–174 (CRAYPK) the chain is Cytoplasmic. Residues 175–195 (FFIYAGMIVNILAALGTAIMY) form a helical membrane-spanning segment. Over 196–200 (MSLKY) the chain is Extracellular. The helical transmembrane segment at 201–221 (WSAGIVFLIFTFMTAWCYWGM) threads the bilayer. Topologically, residues 222-246 (RSRIPLTVAILRVIVLAMKNCPQSL) are cytoplasmic. The chain crosses the membrane as a helical span at residues 247–267 (FVSFFGTIVASAFAMLFSTVV). Residues 268–292 (VATYMKYDPSNTNSGCNVSGGDCSH) are Extracellular-facing. N-linked (GlcNAc...) asparagine glycosylation occurs at Asn-284. A helical transmembrane segment spans residues 293 to 313 (AKLIGVLVVVFFCGYYISEVI). Over 314–350 (RNVMHCTVSGVFGSWYYRYKSDQGMPKWPAMGAFKRA) the chain is Cytoplasmic. The helical transmembrane segment at 351–371 (MTYSFGSICFGSLIVSIIETF) threads the bilayer. Over 372–393 (RQLLQLGKQAAIASTDNANWIR) the chain is Extracellular. Residues 394–414 (IIFWLIDMLVGFIQWIAQYFN) traverse the membrane as a helical segment. Over 415–454 (HYAYCIIALYGKPYLKAAKQTWYMFREKGIDALINDNLVN) the chain is Cytoplasmic. The helical transmembrane segment at 455–475 (VALGFYSLFASYMSCLFAFLY) threads the bilayer. Residues 476-488 (LRFTKPGYNSDGD) lie on the Extracellular side of the membrane. The helical transmembrane segment at 489–509 (FNAPLMAFAFVIALQLTNIAN) threads the bilayer. The Cytoplasmic portion of the chain corresponds to 510–557 (ETIRSGCATFFTALGHDPEVFQAQYPDRFDEIFRSYPQVLNKLTHQDV).

This sequence belongs to the CTL (choline transporter-like) family.

It localises to the cell membrane. Functionally, probably involved in transport through the plasma membrane. This chain is Protein PNS1 (PNS1), found in Candida glabrata (strain ATCC 2001 / BCRC 20586 / JCM 3761 / NBRC 0622 / NRRL Y-65 / CBS 138) (Yeast).